The sequence spans 292 residues: Porphobilinogen deaminase (292 aa).

The residue at position 236 (Cys236) is an S-(dipyrrolylmethanemethyl)cysteine.

This sequence belongs to the HMBS family. As to quaternary structure, monomer. Requires dipyrromethane as cofactor.

The enzyme catalyses 4 porphobilinogen + H2O = hydroxymethylbilane + 4 NH4(+). It participates in porphyrin-containing compound metabolism; protoporphyrin-IX biosynthesis; coproporphyrinogen-III from 5-aminolevulinate: step 2/4. Its function is as follows. Tetrapolymerization of the monopyrrole PBG into the hydroxymethylbilane pre-uroporphyrinogen in several discrete steps. This Wolbachia sp. subsp. Drosophila simulans (strain wRi) protein is Porphobilinogen deaminase.